Reading from the N-terminus, the 280-residue chain is 3-dehydroshikimate dehydratase (280 aa).

Substrate-binding residues include tyrosine 70, arginine 102, and glutamate 142. Glutamate 142 is a binding site for Mn(2+). The Proton acceptor role is filled by histidine 144. Substrate contacts are provided by aspartate 172 and histidine 175. Position 172 (aspartate 172) interacts with Mn(2+). Position 198 (histidine 198) interacts with Mn(2+). 2 residues coordinate substrate: tyrosine 217 and glutamate 253. Position 253 (glutamate 253) interacts with Mn(2+).

In terms of assembly, homodimer. Mn(2+) is required as a cofactor.

It carries out the reaction 3-dehydroshikimate = 3,4-dihydroxybenzoate + H2O. Its pathway is aromatic compound metabolism; 3,4-dihydroxybenzoate biosynthesis; 3,4-dihydroxybenzoate from 3-dehydroquinate: step 2/2. It functions in the pathway siderophore biosynthesis; petrobactin biosynthesis. Involved in the biosynthesis of petrobactin, a catecholate siderophore that functions in both iron acquisition and virulence. Catalyzes the conversion of 3-dehydroshikimate to 3,4-dihydroxybenzoate (3,4-DHBA). In Bacillus anthracis, this protein is 3-dehydroshikimate dehydratase.